The following is a 237-amino-acid chain: NAD-dependent protein deacetylase (237 aa).

Positions 1–237 constitute a Deacetylase sirtuin-type domain; sequence MQDITQAEAI…TIFAELTIKE (237 aa). The NAD(+) site is built by A25, T29, R37, Q100, I102, D103, and H118. Nicotinamide contacts are provided by I102 and D103. Catalysis depends on H118, which acts as the Proton acceptor. Zn(2+) is bound by residues C126, C129, H144, and C147. Residues T185, S186, and N209 each contribute to the NAD(+) site.

It belongs to the sirtuin family. Class U subfamily.

It localises to the cytoplasm. It catalyses the reaction N(6)-acetyl-L-lysyl-[protein] + NAD(+) + H2O = 2''-O-acetyl-ADP-D-ribose + nicotinamide + L-lysyl-[protein]. In terms of biological role, NAD-dependent protein deacetylase which modulates the activities of several enzymes which are inactive in their acetylated form. In Enterococcus faecalis (strain ATCC 700802 / V583), this protein is NAD-dependent protein deacetylase.